The sequence spans 245 residues: MYPVDLHMHTVASTHAYSTLHDYIAEAKLKNIKLFAITDHGPDMADAPHYWHFMNMRVWPRLVDGVGILRGIEANIKNLDGDIDCTGPMLDAVDLLIAGFHEPVFPPQDKAANTQAMIATMAQGNVHIISHPGNPKYPVDIPAIAQAAAKYNVALELNNSSFAHSRKGSEANCRAIAAAVRDAGGWLALGSDSHIAYALGIFEHCERIIAEVNFPQERILNVSPRRLLDYLEQRGRPVIPELAEL.

His-7, His-9, His-15, His-40, Glu-73, His-101, His-131, Asp-192, and His-194 together coordinate Zn(2+).

Belongs to the PHP family. In terms of assembly, homotrimer. Requires Zn(2+) as cofactor.

This chain is Probable phosphatase YpAngola_A2446, found in Yersinia pestis bv. Antiqua (strain Angola).